Reading from the N-terminus, the 767-residue chain is ABC transporter B family member 4 (767 aa).

The tract at residues 81–104 (NYSSSSNSGNNNNNNYNNKNNNNN) is disordered. 5 helical membrane-spanning segments follow: residues 208–228 (IWLFGFGIITAFFSSWVGLQI), 252–272 (AIFILLAQAGLNFLYSTMISV), 324–344 (VSLGVKSFGQIVGGVISLILI), 350–370 (LGMMTILPTMVSVGTFYAGWL), and 429–449 (IGIFQGVTSLALNSVSLLVYW). The ABC transmembrane type-1 domain occupies 211–491 (FGFGIITAFF…LSILFTQIMS (281 aa)). Residues 524–760 (IKFINVDFKY…KGLYYKLVQR (237 aa)) enclose the ABC transporter domain. 559 to 566 (GSSGGGKS) contacts ATP.

This sequence belongs to the ABC transporter superfamily. ABCB family. Multidrug resistance exporter (TC 3.A.1.201) subfamily.

It is found in the membrane. This Dictyostelium discoideum (Social amoeba) protein is ABC transporter B family member 4 (abcB4).